A 427-amino-acid polypeptide reads, in one-letter code: Gamma-glutamyl phosphate reductase (427 aa).

It belongs to the gamma-glutamyl phosphate reductase family.

It localises to the cytoplasm. The enzyme catalyses L-glutamate 5-semialdehyde + phosphate + NADP(+) = L-glutamyl 5-phosphate + NADPH + H(+). Its pathway is amino-acid biosynthesis; L-proline biosynthesis; L-glutamate 5-semialdehyde from L-glutamate: step 2/2. In terms of biological role, catalyzes the NADPH-dependent reduction of L-glutamate 5-phosphate into L-glutamate 5-semialdehyde and phosphate. The product spontaneously undergoes cyclization to form 1-pyrroline-5-carboxylate. This Brucella anthropi (strain ATCC 49188 / DSM 6882 / CCUG 24695 / JCM 21032 / LMG 3331 / NBRC 15819 / NCTC 12168 / Alc 37) (Ochrobactrum anthropi) protein is Gamma-glutamyl phosphate reductase.